Reading from the N-terminus, the 195-residue chain is PE-PGRS family protein PE_PGRS61 (195 aa).

The protein belongs to the mycobacterial PE family. PGRS subfamily. Interacts with human TLR2.

It is found in the secreted. The protein localises to the cell wall. It localises to the cell surface. With respect to regulation, binding of Ca(2+) to PE_PGRS61 induces conformational changes and increases affinity for TLR2. Mediates Ca(2+)-dependent up-regulation of the anti-inflammatory cytokine IL-10. The protein is PE-PGRS family protein PE_PGRS61 of Mycobacterium tuberculosis (strain ATCC 25618 / H37Rv).